The primary structure comprises 500 residues: UDP-GalNAc:beta-1,3-N-acetylgalactosaminyltransferase 2 (500 aa).

At Met1–Val6 the chain is on the cytoplasmic side. A helical; Signal-anchor for type II membrane protein transmembrane segment spans residues Leu7–Leu23. At Arg24 to Arg500 the chain is on the lumenal side. Residues Asn116 and Asn174 are each glycosylated (N-linked (GlcNAc...) asparagine).

It belongs to the glycosyltransferase 31 family. Post-translationally, N-glycosylated. In terms of tissue distribution, expressed in all tissues examined, but at highest levels in testis, adipose tissue, skeletal muscle and ovary.

Its subcellular location is the golgi apparatus membrane. The protein resides in the endoplasmic reticulum. The enzyme catalyses 3-O-(N-acetyl-beta-D-glucosaminyl-(1-&gt;4)-alpha-D-mannosyl)-L-threonyl-[protein] + UDP-N-acetyl-alpha-D-galactosamine = 3-O-[beta-D-GalNAc-(1-&gt;3)-beta-D-GlcNAc-(1-&gt;4)-alpha-D-Man]-L-Thr-[protein] + UDP + H(+). The protein operates within protein modification; protein glycosylation. In terms of biological role, beta-1,3-N-acetylgalactosaminyltransferase that synthesizes a unique carbohydrate structure, GalNAc-beta-1-3GlcNAc, on N- and O-glycans. Has no galactose nor galactosaminyl transferase activity toward any acceptor substrate. Involved in alpha-dystroglycan (DAG1) glycosylation: acts coordinately with GTDC2/POMGnT2 to synthesize a GalNAc-beta3-GlcNAc-beta-terminus at the 4-position of protein O-mannose in the biosynthesis of the phosphorylated O-mannosyl trisaccharide (N-acetylgalactosamine-beta-3-N-acetylglucosamine-beta-4-(phosphate-6-)mannose), a carbohydrate structure present in alpha-dystroglycan, which is required for binding laminin G-like domain-containing extracellular proteins with high affinity. This Homo sapiens (Human) protein is UDP-GalNAc:beta-1,3-N-acetylgalactosaminyltransferase 2 (B3GALNT2).